The sequence spans 452 residues: Phosphoglucosamine mutase (452 aa).

Serine 109 acts as the Phosphoserine intermediate in catalysis. Mg(2+)-binding residues include serine 109, aspartate 248, aspartate 250, and aspartate 252. Phosphoserine is present on serine 109.

Belongs to the phosphohexose mutase family. The cofactor is Mg(2+). Activated by phosphorylation.

The enzyme catalyses alpha-D-glucosamine 1-phosphate = D-glucosamine 6-phosphate. Catalyzes the conversion of glucosamine-6-phosphate to glucosamine-1-phosphate. In Erythrobacter litoralis (strain HTCC2594), this protein is Phosphoglucosamine mutase.